We begin with the raw amino-acid sequence, 66 residues long: Small vasohibin-binding protein (66 aa).

Positions 1 to 23 are enriched in basic and acidic residues; sequence MDPPARKEKSKVKEPAFRVEKAK. Residues 1 to 30 form a disordered region; it reads MDPPARKEKSKVKEPAFRVEKAKQKSAQQE. The stretch at 5–52 forms a coiled coil; that stretch reads ARKEKSKVKEPAFRVEKAKQKSAQQELKQRQRAEIYALNRVMTELEQQ.

This sequence belongs to the SVBP family. Interacts with VASH1 and VASH2. As to expression, highly expressed in bone marrow, spleen and testis.

Its subcellular location is the cytoplasm. The protein localises to the secreted. It localises to the cytoskeleton. Its function is as follows. Enhances the tyrosine carboxypeptidase activity of VASH1 and VASH2, thereby promoting the removal of the C-terminal tyrosine residue of alpha-tubulin. Also required to enhance the solubility and secretion of VASH1 and VASH2. Plays a role in axon and excitatory synapse formation. In Mus musculus (Mouse), this protein is Small vasohibin-binding protein.